A 287-amino-acid chain; its full sequence is ATP synthase gamma chain (287 aa).

The protein belongs to the ATPase gamma chain family. F-type ATPases have 2 components, CF(1) - the catalytic core - and CF(0) - the membrane proton channel. CF(1) has five subunits: alpha(3), beta(3), gamma(1), delta(1), epsilon(1). CF(0) has three main subunits: a, b and c.

The protein resides in the cell inner membrane. In terms of biological role, produces ATP from ADP in the presence of a proton gradient across the membrane. The gamma chain is believed to be important in regulating ATPase activity and the flow of protons through the CF(0) complex. The chain is ATP synthase gamma chain from Xanthomonas campestris pv. campestris (strain B100).